Reading from the N-terminus, the 435-residue chain is DEAD-box ATP-dependent RNA helicase CshB (435 aa).

A Q motif motif is present at residues 5–33 (SRFDQFGFQPFIGLAIDKLGFYEPTEVQQ). One can recognise a Helicase ATP-binding domain in the interval 36–208 (IPGILKGESI…SKYMENPRYE (173 aa)). Position 49 to 56 (49 to 56 (SQTGTGKT)) interacts with ATP. Positions 156–159 (DEAD) match the DEAD box motif. Residues 235–378 (LLKNVLVGSQ…HVDWKNKEFV (144 aa)) enclose the Helicase C-terminal domain. The disordered stretch occupies residues 383 to 435 (RNRRAKREAKRETADPREIGMRKKAKQKGKPNYKKKINYKMNEIKRRERRKKR). Positions 391–403 (AKRETADPREIGM) are enriched in basic and acidic residues. A compositionally biased stretch (basic residues) spans 404-420 (RKKAKQKGKPNYKKKIN).

Belongs to the DEAD box helicase family. CshB subfamily.

Its subcellular location is the cytoplasm. It carries out the reaction ATP + H2O = ADP + phosphate + H(+). DEAD-box RNA helicase involved in cold tolerance, motility, and tolerance to heat, alkali and oxidative stress. This Listeria monocytogenes serovar 1/2a (strain ATCC BAA-679 / EGD-e) protein is DEAD-box ATP-dependent RNA helicase CshB.